The sequence spans 440 residues: Protein EFFECTOR OF TRANSCRIPTION (440 aa).

The region spanning 131–167 (SIQGLGVAVNIHDADDISHGQTESIRTRLRSYGRPVP) is the GIY-YIG domain. The interval 172-216 (LGDNASQTITQKKTGGRSKDKKHGFEEERDVSRVEAEENNTNSVH) is disordered. A compositionally biased stretch (polar residues) spans 175 to 184 (NASQTITQKK). Over residues 194 to 207 (HGFEEERDVSRVEA) the composition is skewed to basic and acidic residues. Cx9Cx9RCx2HK repeat units lie at residues 247-272 (CGVL…TEHK) and 295-320 (CGVI…EDHK). Residues 339 to 363 (ILKEDKSKPKTRTSSTNQEEPGESL) form a disordered region. 2 Cx9Cx9RCx2HK repeats span residues 365–390 (CEAT…WQHK) and 409–434 (CGVK…QEHK).

Its subcellular location is the nucleus. Its function is as follows. Transcription regulator that negatively modulates gibberellin-mediated developmental processes. May act as transcriptional repressor of giberellin controlled genes. Binds DNA without sequence preference. The chain is Protein EFFECTOR OF TRANSCRIPTION from Brassica napus (Rape).